The primary structure comprises 225 residues: Fibronectin type III domain-containing protein (225 aa).

The N-terminal stretch at 1-17 is a signal peptide; sequence MFSFGIILLTVVSFTNA. The 101-residue stretch at 106–206 folds into the Fibronectin type-III domain; it reads PPTNVIVEST…MPLNVKTPDI (101 aa).

In terms of tissue distribution, component of the organic matrix of calcified shell layers like nacre and prisms.

It localises to the secreted. This is Fibronectin type III domain-containing protein from Mytilus californianus (California mussel).